A 430-amino-acid polypeptide reads, in one-letter code: F-box protein At1g49990 (430 aa).

The F-box domain maps to 1 to 45 (METGRRRTIPEVEILARLPLRSIARFKSVCKRWKSVIESDYFRRL).

In Arabidopsis thaliana (Mouse-ear cress), this protein is F-box protein At1g49990.